A 223-amino-acid chain; its full sequence is Enolase-phosphatase E1 (223 aa).

This sequence belongs to the HAD-like hydrolase superfamily. MasA/MtnC family. As to quaternary structure, monomer. Mg(2+) serves as cofactor.

The enzyme catalyses 5-methylsulfanyl-2,3-dioxopentyl phosphate + H2O = 1,2-dihydroxy-5-(methylsulfanyl)pent-1-en-3-one + phosphate. It participates in amino-acid biosynthesis; L-methionine biosynthesis via salvage pathway; L-methionine from S-methyl-5-thio-alpha-D-ribose 1-phosphate: step 3/6. Its pathway is amino-acid biosynthesis; L-methionine biosynthesis via salvage pathway; L-methionine from S-methyl-5-thio-alpha-D-ribose 1-phosphate: step 4/6. Functionally, bifunctional enzyme that catalyzes the enolization of 2,3-diketo-5-methylthiopentyl-1-phosphate (DK-MTP-1-P) into the intermediate 2-hydroxy-3-keto-5-methylthiopentenyl-1-phosphate (HK-MTPenyl-1-P), which is then dephosphorylated to form the acireductone 1,2-dihydroxy-3-keto-5-methylthiopentene (DHK-MTPene). The polypeptide is Enolase-phosphatase E1 (Aquifex aeolicus (strain VF5)).